The following is a 517-amino-acid chain: Bifunctional purine biosynthesis protein PurH (517 aa).

The MGS-like domain occupies 1 to 146 (MKRLALLSTS…KNFAHLTVLC (146 aa)).

This sequence belongs to the PurH family.

The catalysed reaction is (6R)-10-formyltetrahydrofolate + 5-amino-1-(5-phospho-beta-D-ribosyl)imidazole-4-carboxamide = 5-formamido-1-(5-phospho-D-ribosyl)imidazole-4-carboxamide + (6S)-5,6,7,8-tetrahydrofolate. It catalyses the reaction IMP + H2O = 5-formamido-1-(5-phospho-D-ribosyl)imidazole-4-carboxamide. The protein operates within purine metabolism; IMP biosynthesis via de novo pathway; 5-formamido-1-(5-phospho-D-ribosyl)imidazole-4-carboxamide from 5-amino-1-(5-phospho-D-ribosyl)imidazole-4-carboxamide (10-formyl THF route): step 1/1. It functions in the pathway purine metabolism; IMP biosynthesis via de novo pathway; IMP from 5-formamido-1-(5-phospho-D-ribosyl)imidazole-4-carboxamide: step 1/1. The sequence is that of Bifunctional purine biosynthesis protein PurH from Trichodesmium erythraeum (strain IMS101).